We begin with the raw amino-acid sequence, 71 residues long: Pro-MCH (71 aa).

Residues 1–20 (AKMSLSSYILILTLVLFSQG) form the signal peptide.

It belongs to the melanin-concentrating hormone family.

It localises to the secreted. The protein is Pro-MCH (PMCH) of Carlito syrichta (Philippine tarsier).